Here is a 458-residue protein sequence, read N- to C-terminus: cAMP-dependent protein kinase regulatory subunit (458 aa).

The dimerization and phosphorylation stretch occupies residues 28–222 (QFAANYFNKK…GLESAVGKNF (195 aa)). The residue at position 184 (S184) is a Phosphoserine. 3',5'-cyclic AMP-binding positions include 223-338 (LFNK…FLKS), E288, R297, 341-457 (LLKS…RADK), E407, and R416.

Belongs to the cAMP-dependent kinase regulatory chain family. In terms of assembly, tetramer, composed of 2 regulatory (R) and 2 catalytic (C) subunits. In the presence of cAMP it dissociates into 2 active monomeric C subunits and an R dimer.

The chain is cAMP-dependent protein kinase regulatory subunit (PKAR) from Eremothecium gossypii (strain ATCC 10895 / CBS 109.51 / FGSC 9923 / NRRL Y-1056) (Yeast).